The sequence spans 515 residues: Putative myristoylated protein 118L (515 aa).

The N-myristoyl glycine; by host moiety is linked to residue Gly-2. Helical transmembrane passes span 188–208, 214–234, and 482–502; these read LSLA…VGGV, IIFP…FQWT, and WLLY…AFSS.

The protein belongs to the IIV-6 118L/458R family.

The protein resides in the membrane. The protein is Putative myristoylated protein 118L of Acheta domesticus (House cricket).